The chain runs to 323 residues: Methionyl-tRNA formyltransferase (323 aa).

121 to 124 (SLLP) serves as a coordination point for (6S)-5,6,7,8-tetrahydrofolate.

It belongs to the Fmt family.

The enzyme catalyses L-methionyl-tRNA(fMet) + (6R)-10-formyltetrahydrofolate = N-formyl-L-methionyl-tRNA(fMet) + (6S)-5,6,7,8-tetrahydrofolate + H(+). Its function is as follows. Attaches a formyl group to the free amino group of methionyl-tRNA(fMet). The formyl group appears to play a dual role in the initiator identity of N-formylmethionyl-tRNA by promoting its recognition by IF2 and preventing the misappropriation of this tRNA by the elongation apparatus. The sequence is that of Methionyl-tRNA formyltransferase from Desulfotalea psychrophila (strain LSv54 / DSM 12343).